We begin with the raw amino-acid sequence, 1359 residues long: DNA-directed RNA polymerase subunit beta (1359 aa).

The protein belongs to the RNA polymerase beta chain family. As to quaternary structure, the RNAP catalytic core consists of 2 alpha, 1 beta, 1 beta' and 1 omega subunit. When a sigma factor is associated with the core the holoenzyme is formed, which can initiate transcription.

The catalysed reaction is RNA(n) + a ribonucleoside 5'-triphosphate = RNA(n+1) + diphosphate. Functionally, DNA-dependent RNA polymerase catalyzes the transcription of DNA into RNA using the four ribonucleoside triphosphates as substrates. This Nitrosomonas eutropha (strain DSM 101675 / C91 / Nm57) protein is DNA-directed RNA polymerase subunit beta.